Reading from the N-terminus, the 909-residue chain is UPF0182 protein H16_A1615 (909 aa).

Transmembrane regions (helical) follow at residues 16–36, 58–78, 114–134, 169–189, 205–225, 246–266, and 281–301; these read TWVV…GLVV, ALLF…SGWL, VAVL…AIAL, WLLL…GLRG, ATHG…SYWL, VHVG…AAAA, and AAAL…PALF.

The protein belongs to the UPF0182 family.

It is found in the cell membrane. The chain is UPF0182 protein H16_A1615 from Cupriavidus necator (strain ATCC 17699 / DSM 428 / KCTC 22496 / NCIMB 10442 / H16 / Stanier 337) (Ralstonia eutropha).